The sequence spans 182 residues: Biotin carboxyl carrier protein of acetyl-CoA carboxylase (182 aa).

The interval 70–95 is disordered; it reads AAPSPSPEPGTSRAADHAVTSSGSQP. In terms of domain architecture, Biotinyl-binding spans 104–180; that stretch reads LAEVASPMVG…EYNQPLMRIK (77 aa). An N6-biotinyllysine modification is found at Lys146.

In terms of assembly, homodimer.

The protein operates within lipid metabolism; fatty acid biosynthesis. This protein is a component of the acetyl coenzyme A carboxylase complex; first, biotin carboxylase catalyzes the carboxylation of the carrier protein and then the transcarboxylase transfers the carboxyl group to form malonyl-CoA. The polypeptide is Biotin carboxyl carrier protein of acetyl-CoA carboxylase (accB) (Nostoc sp. (strain PCC 7120 / SAG 25.82 / UTEX 2576)).